Here is a 181-residue protein sequence, read N- to C-terminus: UPF0398 protein LMOf2365_1918 (181 aa).

This sequence belongs to the UPF0398 family.

This Listeria monocytogenes serotype 4b (strain F2365) protein is UPF0398 protein LMOf2365_1918.